Consider the following 251-residue polypeptide: Triosephosphate isomerase (251 aa).

Residue 9-11 coordinates substrate; it reads NWK. The Electrophile role is filled by His95. Residue Glu167 is the Proton acceptor of the active site. Residues Gly173, Ser213, and 234–235 each bind substrate; that span reads GG. Position 213 is a phosphoserine (Ser213).

Belongs to the triosephosphate isomerase family. Homodimer.

It localises to the cytoplasm. The enzyme catalyses D-glyceraldehyde 3-phosphate = dihydroxyacetone phosphate. It functions in the pathway carbohydrate biosynthesis; gluconeogenesis. The protein operates within carbohydrate degradation; glycolysis; D-glyceraldehyde 3-phosphate from glycerone phosphate: step 1/1. In terms of biological role, involved in the gluconeogenesis. Catalyzes stereospecifically the conversion of dihydroxyacetone phosphate (DHAP) to D-glyceraldehyde-3-phosphate (G3P). The sequence is that of Triosephosphate isomerase from Shouchella clausii (strain KSM-K16) (Alkalihalobacillus clausii).